The primary structure comprises 306 residues: Pantothenate kinase (306 aa).

Residue 91 to 98 (GSVAVGKS) coordinates ATP.

It belongs to the prokaryotic pantothenate kinase family.

The protein localises to the cytoplasm. It carries out the reaction (R)-pantothenate + ATP = (R)-4'-phosphopantothenate + ADP + H(+). It functions in the pathway cofactor biosynthesis; coenzyme A biosynthesis; CoA from (R)-pantothenate: step 1/5. The protein is Pantothenate kinase of Streptococcus equi subsp. zooepidemicus (strain MGCS10565).